The chain runs to 271 residues: MPELPEVEVISNFLFDKIKNKKISNVTVNNWNLRVPITKNIDDLLKGKVINDIKRRGKYIISNIDASMAVIIHLGMSGKLIYVEDNQAQNKHDHVIFLFSDNTSLIFNDPRRFGLVIVLNREQELNFFNNLGIEPLTDEFDGHYLQKLLKNRKANIKSVLMNNKLIVGVGNIYASESLFRARISPLRLAQDLTYIECEKLAIEIKNTLSDAIAAGGSTLKDYAQPSGSAGYFQNNFYVYGKVQKPCRICNNIITLIRQNGRSTYFCNACQN.

The Schiff-base intermediate with DNA role is filled by proline 2. The active-site Proton donor is glutamate 3. Residue lysine 58 is the Proton donor; for beta-elimination activity of the active site. The DNA site is built by histidine 92, arginine 111, and arginine 152. The FPG-type zinc-finger motif lies at 237–271 (YVYGKVQKPCRICNNIITLIRQNGRSTYFCNACQN). The active-site Proton donor; for delta-elimination activity is arginine 261.

The protein belongs to the FPG family. Monomer. It depends on Zn(2+) as a cofactor.

The enzyme catalyses Hydrolysis of DNA containing ring-opened 7-methylguanine residues, releasing 2,6-diamino-4-hydroxy-5-(N-methyl)formamidopyrimidine.. It carries out the reaction 2'-deoxyribonucleotide-(2'-deoxyribose 5'-phosphate)-2'-deoxyribonucleotide-DNA = a 3'-end 2'-deoxyribonucleotide-(2,3-dehydro-2,3-deoxyribose 5'-phosphate)-DNA + a 5'-end 5'-phospho-2'-deoxyribonucleoside-DNA + H(+). Involved in base excision repair of DNA damaged by oxidation or by mutagenic agents. Acts as a DNA glycosylase that recognizes and removes damaged bases. Has a preference for oxidized purines, such as 7,8-dihydro-8-oxoguanine (8-oxoG). Has AP (apurinic/apyrimidinic) lyase activity and introduces nicks in the DNA strand. Cleaves the DNA backbone by beta-delta elimination to generate a single-strand break at the site of the removed base with both 3'- and 5'-phosphates. The polypeptide is Formamidopyrimidine-DNA glycosylase (Wolbachia pipientis subsp. Culex pipiens (strain wPip)).